Reading from the N-terminus, the 1668-residue chain is Zinc finger CCCH domain-containing protein 13 (1668 aa).

2 disordered regions span residues 1–38 and 56–157; these read MSKIRRKVTVENTKTISDSTSRRPSVFERLGPSTGSTA and TCRF…GDIN. Over residues 10 to 23 the composition is skewed to polar residues; sequence VENTKTISDSTSRR. The segment at 36 to 64 adopts a C3H1-type zinc-finger fold; it reads STAETQCRNWLKTGNCLYGNTCRFVHGPS. Ser-64 and Ser-77 each carry phosphoserine. The span at 76-136 shows a compositional bias: basic and acidic residues; the sequence is RSPERPTGDL…IKITKERTPE (61 aa). Residues Lys-179 and Lys-194 each participate in a glycyl lysine isopeptide (Lys-Gly) (interchain with G-Cter in SUMO2) cross-link. Disordered stretches follow at residues 190-1112 and 1125-1466; these read EIII…TATA and AAAT…PISD. Phosphoserine is present on residues Ser-198, Ser-207, Ser-209, and Ser-211. Residues 204 to 213 show a composition bias toward low complexity; that stretch reads SKLSPSPSLR. Over residues 214–224 the composition is skewed to basic residues; it reads KSSKSPKRKSS. Thr-237 is subject to Phosphothreonine. A phosphoserine mark is found at Ser-238 and Ser-242. Positions 239-254 are enriched in polar residues; it reads AVSSPLLDQQRNSKTN. Thr-263 bears the Phosphothreonine mark. Ser-265 is modified (phosphoserine). Residues 283–315 are compositionally biased toward basic and acidic residues; sequence KYKVKDRIEEKTRDGKDRGRDFERQREKRDKPR. Residues Ser-316, Ser-318, Ser-325, and Ser-328 each carry the phosphoserine modification. Residues 323-346 show a composition bias toward low complexity; that stretch reads HHSPISSRHHSSSSQSGSSIQRHS. Thr-354 and Thr-364 each carry phosphothreonine. Phosphoserine is present on residues Ser-370, Ser-372, and Ser-381. Residues 370 to 382 are compositionally biased toward low complexity; it reads SASPYPSHSLSSP. Basic and acidic residues-rich tracts occupy residues 394–434 and 442–575; these read PMRE…REER and SSRD…EKGS. A compositionally biased stretch (low complexity) spans 584 to 593; that stretch reads DSHSSNSNYH. A compositionally biased stretch (basic and acidic residues) spans 594-640; sequence DSWETRSSYPERDRYPERDNRDQARDSSFERRHGERDRRDNRERDQR. Ser-643 is subject to Phosphoserine. Positions 645–789 form a coiled coil; that stretch reads IRHQGRNDEL…RDKERERQRD (145 aa). Residues 649–821 show a composition bias toward basic and acidic residues; the sequence is GRNDELERDE…NPRDGHDERK (173 aa). A phosphoserine mark is found at Ser-831, Ser-833, Ser-837, Ser-845, Ser-848, Ser-853, Ser-873, Ser-875, and Ser-877. The span at 881-957 shows a compositional bias: basic and acidic residues; it reads LTEDRQGRWK…TSDRAHDENK (77 aa). Thr-882 is modified (phosphothreonine). At Ser-943 the chain carries Phosphoserine. Basic residues predominate over residues 958–969; it reads KKAKIQKKPIKK. Over residues 970–981 the composition is skewed to basic and acidic residues; that stretch reads KKEDDVGIERGN. Phosphoserine occurs at positions 986, 993, 1010, 1014, and 1017. Over residues 996-1010 the composition is skewed to basic residues; sequence KGQKKKSIEKKRKKS. A Phosphothreonine modification is found at Thr-1033. Over residues 1073-1083 the composition is skewed to basic and acidic residues; sequence PDRTEVTEAEH. 2 stretches are compositionally biased toward low complexity: residues 1084 to 1100 and 1125 to 1153; these read TATATTPGSTPSPLSSL and AAATSFSTSAITISTSATPTNTTNNTFAN. The segment covering 1163 to 1188 has biased composition (basic and acidic residues); sequence TRVEKVETPHVTIEDAQHRKPMDQKR. Thr-1170 bears the Phosphothreonine mark. Phosphoserine occurs at positions 1191, 1194, 1208, and 1210. The segment covering 1213–1223 has biased composition (basic and acidic residues); that stretch reads SAHRSGDDQSG. Ser-1230 carries the post-translational modification Phosphoserine. Basic and acidic residues-rich tracts occupy residues 1231-1286 and 1294-1379; these read GSRD…DRQV and DSRD…DRTF. The stretch at 1300–1366 forms a coiled coil; the sequence is QERDRYEHDR…RERERLISDS (67 aa). A phosphoserine mark is found at Ser-1364, Ser-1366, Ser-1382, Ser-1386, Ser-1406, Ser-1409, Ser-1438, Leu-1453, Gly-1456, Ser-1465, and Asp-1466. Basic and acidic residues-rich tracts occupy residues 1386 to 1421 and 1429 to 1438; these read SVKRCEAKLEGEHERDLESTSRDSLALDKERMDKDL and ETNKSERTES.

It belongs to the ZC3H13 family. Component of the WMM complex, a N6-methyltransferase complex composed of a catalytic subcomplex, named MAC, and of an associated subcomplex, named MACOM. The MAC subcomplex is composed of METTL3 and METTL14. The MACOM subcomplex is composed of WTAP, ZC3H13, CBLL1/HAKAI, VIRMA, and, in some cases of RBM15 (RBM15 or RBM15B). Also a component of a MACOM-like complex, named WTAP complex, composed of WTAP, ZC3H13, CBLL1/HAKAI, VIRMA, RBM15, BCLAF1 and THRAP3.

The protein localises to the nucleus speckle. It is found in the nucleus. Its subcellular location is the nucleoplasm. Functionally, associated component of the WMM complex, a complex that mediates N6-methyladenosine (m6A) methylation of RNAs, a modification that plays a role in the efficiency of mRNA splicing and RNA processing. Acts as a key regulator of m6A methylation by promoting m6A methylation of mRNAs at the 3'-UTR. Controls embryonic stem cells (ESCs) pluripotency via its role in m6A methylation. In the WMM complex, anchors component of the MACOM subcomplex in the nucleus. Also required for bridging WTAP to the RNA-binding component RBM15 (RBM15 or RBM15B). The protein is Zinc finger CCCH domain-containing protein 13 of Homo sapiens (Human).